We begin with the raw amino-acid sequence, 219 residues long: Transcriptional regulatory protein QseB (219 aa).

A Response regulatory domain is found at 2–116 (RILLVEDDTL…EVAARLEALV (115 aa)). The residue at position 51 (D51) is a 4-aspartylphosphate. Positions 124 to 218 (SSELRHGQVT…VHGIGYTLGD (95 aa)) form a DNA-binding region, ompR/PhoB-type.

In terms of processing, phosphorylated by QseC.

It localises to the cytoplasm. In terms of biological role, member of a two-component regulatory system QseB/QseC. Activates the flagella regulon by activating transcription of flhDC. This Salmonella typhimurium (strain LT2 / SGSC1412 / ATCC 700720) protein is Transcriptional regulatory protein QseB (qseB).